We begin with the raw amino-acid sequence, 80 residues long: Protein UL148B (80 aa).

A helical transmembrane segment spans residues 10-30 (AICVGLVMGVTVIASCALLVF).

It localises to the host membrane. This chain is Protein UL148B (UL148B), found in Homo sapiens (Human).